The sequence spans 70 residues: DNA-directed RNA polymerase subunit omega (70 aa).

This sequence belongs to the RNA polymerase subunit omega family. In terms of assembly, the RNAP catalytic core consists of 2 alpha, 1 beta, 1 beta' and 1 omega subunit. When a sigma factor is associated with the core the holoenzyme is formed, which can initiate transcription.

It carries out the reaction RNA(n) + a ribonucleoside 5'-triphosphate = RNA(n+1) + diphosphate. Functionally, promotes RNA polymerase assembly. Latches the N- and C-terminal regions of the beta' subunit thereby facilitating its interaction with the beta and alpha subunits. The protein is DNA-directed RNA polymerase subunit omega of Nitratiruptor sp. (strain SB155-2).